We begin with the raw amino-acid sequence, 580 residues long: Alpha-thujene synthase TPS3, chloroplastic (580 aa).

A chloroplast-targeting transit peptide spans 1 to 26 (MALQLLTPSFSFQHSPSPHRLTTLRY). (2E)-geranyl diphosphate contacts are provided by Arg296, Asp333, Asp337, Arg473, and Asp476. Residues Asp333 and Asp337 each coordinate Mg(2+). The DDXXD motif signature appears at 333 to 337 (DDVYD). Mg(2+) contacts are provided by Asp476, Thr480, and Glu484.

The protein belongs to the terpene synthase family. Tpsb subfamily. Monomer. It depends on Mg(2+) as a cofactor. The cofactor is Mn(2+). As to expression, mostly expressed in developing and mature fruits, and, to a lower extent, in male leaves. Barely detectable in female leaves and shoots.

It localises to the plastid. The protein localises to the chloroplast. The catalysed reaction is (2E)-geranyl diphosphate = alpha-thujene + diphosphate. It catalyses the reaction (2E)-geranyl diphosphate = (1R,5R)-sabinene + diphosphate. It participates in secondary metabolite biosynthesis; terpenoid biosynthesis. Its function is as follows. Monoterpene synthase (TPS) involved in the biosynthesis of monoterpene natural products used by traditional Chinese medicine to treat headache, inflammation and intoxication. Catalyzes the conversion of (2E)-geranyl diphosphate (GPP) into alpha-thujene and (1R,5R)-sabinene. The chain is Alpha-thujene synthase TPS3, chloroplastic from Litsea cubeba (Aromatic litsea).